Consider the following 161-residue polypeptide: Phosphopantetheine adenylyltransferase (161 aa).

Residue Thr10 coordinates substrate. Residues 10-11 (TF) and His18 contribute to the ATP site. Substrate contacts are provided by Lys42, Met74, and Arg88. ATP-binding positions include 89 to 91 (GLR), Glu99, and 124 to 130 (WSFISSS).

It belongs to the bacterial CoaD family. As to quaternary structure, homohexamer. Mg(2+) serves as cofactor.

The protein localises to the cytoplasm. It catalyses the reaction (R)-4'-phosphopantetheine + ATP + H(+) = 3'-dephospho-CoA + diphosphate. The protein operates within cofactor biosynthesis; coenzyme A biosynthesis; CoA from (R)-pantothenate: step 4/5. Its function is as follows. Reversibly transfers an adenylyl group from ATP to 4'-phosphopantetheine, yielding dephospho-CoA (dPCoA) and pyrophosphate. The sequence is that of Phosphopantetheine adenylyltransferase from Serratia marcescens.